Consider the following 97-residue polypeptide: Exodeoxyribonuclease 7 small subunit (97 aa).

The disordered stretch occupies residues 64–97 (NGQLHPAEEKGDDVSNNGVQNQGYKSQFLDGDVF). A compositionally biased stretch (polar residues) spans 77–88 (VSNNGVQNQGYK).

This sequence belongs to the XseB family. In terms of assembly, heterooligomer composed of large and small subunits.

The protein resides in the cytoplasm. The catalysed reaction is Exonucleolytic cleavage in either 5'- to 3'- or 3'- to 5'-direction to yield nucleoside 5'-phosphates.. In terms of biological role, bidirectionally degrades single-stranded DNA into large acid-insoluble oligonucleotides, which are then degraded further into small acid-soluble oligonucleotides. The protein is Exodeoxyribonuclease 7 small subunit of Limosilactobacillus fermentum (strain NBRC 3956 / LMG 18251) (Lactobacillus fermentum).